Consider the following 468-residue polypeptide: 6-phospho-beta-galactosidase (468 aa).

The D-galactose 6-phosphate site is built by Gln19, His116, Asn159, Glu160, and Asn297. The active-site Proton donor is Glu160. Glu375 functions as the Nucleophile in the catalytic mechanism. Residues Ser428, Trp429, Lys435, and Tyr437 each contribute to the D-galactose 6-phosphate site.

It belongs to the glycosyl hydrolase 1 family.

The catalysed reaction is a 6-phospho-beta-D-galactoside + H2O = D-galactose 6-phosphate + an alcohol. It participates in carbohydrate metabolism; lactose degradation; D-galactose 6-phosphate and beta-D-glucose from lactose 6-phosphate: step 1/1. This chain is 6-phospho-beta-galactosidase, found in Streptococcus uberis (strain ATCC BAA-854 / 0140J).